Here is a 98-residue protein sequence, read N- to C-terminus: Co-chaperonin GroES 3 (98 aa).

It belongs to the GroES chaperonin family. In terms of assembly, heptamer of 7 subunits arranged in a ring. Interacts with the chaperonin GroEL.

Its subcellular location is the cytoplasm. In terms of biological role, together with the chaperonin GroEL, plays an essential role in assisting protein folding. The GroEL-GroES system forms a nano-cage that allows encapsulation of the non-native substrate proteins and provides a physical environment optimized to promote and accelerate protein folding. GroES binds to the apical surface of the GroEL ring, thereby capping the opening of the GroEL channel. This is Co-chaperonin GroES 3 from Mesorhizobium japonicum (strain LMG 29417 / CECT 9101 / MAFF 303099) (Mesorhizobium loti (strain MAFF 303099)).